A 447-amino-acid polypeptide reads, in one-letter code: D-ribitol-5-phosphate cytidylyltransferase (447 aa).

Belongs to the IspD/TarI cytidylyltransferase family. IspD subfamily. Homodimer.

Its subcellular location is the cytoplasm. The protein localises to the cytosol. It carries out the reaction D-ribitol 5-phosphate + CTP + H(+) = CDP-L-ribitol + diphosphate. The catalysed reaction is D-ribose 5-phosphate + CTP + H(+) = CDP-D-ribose + diphosphate. The enzyme catalyses D-ribulose 5-phosphate + CTP + H(+) = CDP-D-ribulose + diphosphate. Its pathway is protein modification; protein glycosylation. In terms of biological role, cytidylyltransferase required for protein O-linked mannosylation. Catalyzes the formation of CDP-ribitol nucleotide sugar from D-ribitol 5-phosphate. CDP-ribitol is a substrate of FKTN during the biosynthesis of the phosphorylated O-mannosyl trisaccharide (N-acetylgalactosamine-beta-3-N-acetylglucosamine-beta-4-(phosphate-6-)mannose), a carbohydrate structure present in alpha-dystroglycan (DAG1), which is required for binding laminin G-like domain-containing extracellular proteins with high affinity. Shows activity toward other pentose phosphate sugars and mediates formation of CDP-ribulose or CDP-ribose using CTP and ribulose-5-phosphate or ribose-5-phosphate, respectively. Not involved in dolichol production. The protein is D-ribitol-5-phosphate cytidylyltransferase (Crppa) of Mus musculus (Mouse).